Reading from the N-terminus, the 236-residue chain is Ribosome assembly factor MRT4 (236 aa).

This sequence belongs to the universal ribosomal protein uL10 family. As to quaternary structure, associates with the pre-60S ribosomal particle.

The protein localises to the nucleus. It is found in the nucleolus. Its subcellular location is the cytoplasm. In terms of biological role, component of the ribosome assembly machinery. Nuclear paralog of the ribosomal protein P0, it binds pre-60S subunits at an early stage of assembly in the nucleolus, and is replaced by P0 in cytoplasmic pre-60S subunits and mature 80S ribosomes. This is Ribosome assembly factor MRT4 from Saccharomyces cerevisiae (strain ATCC 204508 / S288c) (Baker's yeast).